A 107-amino-acid chain; its full sequence is Iron-sulfur cluster assembly protein CyaY (107 aa).

It belongs to the frataxin family.

In terms of biological role, involved in iron-sulfur (Fe-S) cluster assembly. May act as a regulator of Fe-S biogenesis. The sequence is that of Iron-sulfur cluster assembly protein CyaY from Thioalkalivibrio sulfidiphilus (strain HL-EbGR7).